Here is a 332-residue protein sequence, read N- to C-terminus: Cyclin-dependent kinase 1 (332 aa).

The Protein kinase domain maps to 22–312; it reads FTKLEKIGEG…AKKALVHPYF (291 aa). ATP contacts are provided by residues 28-36 and lysine 51; that span reads IGEGTYGVV. Threonine 32 is modified (phosphothreonine). Tyrosine 33 is modified (phosphotyrosine). Catalysis depends on aspartate 146, which acts as the Proton acceptor.

The protein belongs to the protein kinase superfamily. CMGC Ser/Thr protein kinase family. CDC2/CDKX subfamily. In terms of assembly, forms a stable but non-covalent complex with a regulatory subunit and with a cyclin. Interacts with cks-1. Post-translationally, phosphorylated.

Its subcellular location is the nucleus. The protein localises to the cytoplasm. It localises to the cytoskeleton. The protein resides in the microtubule organizing center. It is found in the centrosome. Its subcellular location is the chromosome. The catalysed reaction is L-seryl-[protein] + ATP = O-phospho-L-seryl-[protein] + ADP + H(+). It carries out the reaction L-threonyl-[protein] + ATP = O-phospho-L-threonyl-[protein] + ADP + H(+). It catalyses the reaction [DNA-directed RNA polymerase] + ATP = phospho-[DNA-directed RNA polymerase] + ADP + H(+). Its activity is regulated as follows. Phosphorylation both activates and inactivates the enzyme depending on the site of phosphorylation. Its function is as follows. Plays a key role in the control of the eukaryotic cell cycle. Required for entry into S-phase and mitosis. Acts as a component of the kinase complex that phosphorylates the repetitive C-terminus of RNA polymerase II. May function in concert with npp-16 to arrest prophase blastomeres in response to anoxia. In Caenorhabditis elegans, this protein is Cyclin-dependent kinase 1 (cdk-1).